Reading from the N-terminus, the 79-residue chain is MESIEQRVKKIVAEQLGVNEAEIKNESSFLDDLGADSLDMVELVMALEDEFETEIPDEEAEKITTVQQAIDYINSHGKQ.

The Carrier domain occupies 2-77 (ESIEQRVKKI…QAIDYINSHG (76 aa)). Residue S37 is modified to O-(pantetheine 4'-phosphoryl)serine.

This sequence belongs to the acyl carrier protein (ACP) family. In terms of processing, 4'-phosphopantetheine is transferred from CoA to a specific serine of apo-ACP by AcpS. This modification is essential for activity because fatty acids are bound in thioester linkage to the sulfhydryl of the prosthetic group.

The protein resides in the cytoplasm. The protein operates within lipid metabolism; fatty acid biosynthesis. In terms of biological role, carrier of the growing fatty acid chain in fatty acid biosynthesis. The protein is Acyl carrier protein of Bordetella avium (strain 197N).